The chain runs to 152 residues: Putative pre-16S rRNA nuclease (152 aa).

It belongs to the YqgF nuclease family.

It is found in the cytoplasm. Could be a nuclease involved in processing of the 5'-end of pre-16S rRNA. The protein is Putative pre-16S rRNA nuclease of Synechocystis sp. (strain ATCC 27184 / PCC 6803 / Kazusa).